Reading from the N-terminus, the 307-residue chain is uncharacterized protein (307 aa).

This is an uncharacterized protein from Sinorhizobium fredii (strain NBRC 101917 / NGR234).